A 656-amino-acid chain; its full sequence is Nuclear elongation and deformation protein 1 (656 aa).

2 positions are modified to phosphoserine: serine 99 and serine 103. Positions 99–118 (SPIVSPTTSPKQTPSINVTE) are enriched in polar residues. The disordered stretch occupies residues 99–121 (SPIVSPTTSPKQTPSINVTEPQD). Threonine 106 bears the Phosphothreonine mark. Phosphoserine is present on residues serine 107, serine 159, and serine 286. Disordered stretches follow at residues 282-328 (VYGH…VSES) and 587-656 (SDEE…ENAV). A compositionally biased stretch (low complexity) spans 291 to 300 (PSRTPASPKS). A phosphoserine mark is found at serine 318, serine 321, and serine 587. Residues 318–328 (SEQSLSPVSES) show a composition bias toward polar residues. Over residues 596 to 609 (KSTSKSPKTPKNTK) the composition is skewed to low complexity. Over residues 640-656 (FEGEEDEEGEEDVENAV) the composition is skewed to acidic residues.

This sequence belongs to the lipin family. In terms of assembly, interacts with dis3, pim1 and nup189.

May have a role in the maintenance of the nuclear envelope structure and in minichromosome stability. The chain is Nuclear elongation and deformation protein 1 (ned1) from Schizosaccharomyces pombe (strain 972 / ATCC 24843) (Fission yeast).